Here is a 186-residue protein sequence, read N- to C-terminus: Orotate phosphoribosyltransferase (186 aa).

Residues arginine 93, lysine 94, lysine 97, histidine 99, and 119 to 127 (EDVTTTGGS) contribute to the 5-phospho-alpha-D-ribose 1-diphosphate site. 2 residues coordinate orotate: threonine 123 and arginine 151.

This sequence belongs to the purine/pyrimidine phosphoribosyltransferase family. PyrE subfamily. As to quaternary structure, homodimer. The cofactor is Mg(2+).

The enzyme catalyses orotidine 5'-phosphate + diphosphate = orotate + 5-phospho-alpha-D-ribose 1-diphosphate. The protein operates within pyrimidine metabolism; UMP biosynthesis via de novo pathway; UMP from orotate: step 1/2. Functionally, catalyzes the transfer of a ribosyl phosphate group from 5-phosphoribose 1-diphosphate to orotate, leading to the formation of orotidine monophosphate (OMP). The protein is Orotate phosphoribosyltransferase of Pyrococcus horikoshii (strain ATCC 700860 / DSM 12428 / JCM 9974 / NBRC 100139 / OT-3).